A 379-amino-acid chain; its full sequence is 1-deoxy-D-xylulose 5-phosphate reductoisomerase (379 aa).

Positions 10, 11, 12, 13, 39, and 121 each coordinate NADPH. Lysine 122 is a 1-deoxy-D-xylulose 5-phosphate binding site. Residue glutamate 123 participates in NADPH binding. Residue aspartate 147 coordinates Mn(2+). Residues serine 148, glutamate 149, serine 173, and histidine 196 each coordinate 1-deoxy-D-xylulose 5-phosphate. Residue glutamate 149 participates in Mn(2+) binding. NADPH is bound at residue glycine 202. Residues serine 209, asparagine 214, lysine 215, and glutamate 218 each coordinate 1-deoxy-D-xylulose 5-phosphate. Glutamate 218 provides a ligand contact to Mn(2+).

The protein belongs to the DXR family. The cofactor is Mg(2+). Mn(2+) serves as cofactor.

The enzyme catalyses 2-C-methyl-D-erythritol 4-phosphate + NADP(+) = 1-deoxy-D-xylulose 5-phosphate + NADPH + H(+). It participates in isoprenoid biosynthesis; isopentenyl diphosphate biosynthesis via DXP pathway; isopentenyl diphosphate from 1-deoxy-D-xylulose 5-phosphate: step 1/6. Functionally, catalyzes the NADPH-dependent rearrangement and reduction of 1-deoxy-D-xylulose-5-phosphate (DXP) to 2-C-methyl-D-erythritol 4-phosphate (MEP). This is 1-deoxy-D-xylulose 5-phosphate reductoisomerase from Chlamydia felis (strain Fe/C-56) (Chlamydophila felis).